The primary structure comprises 275 residues: Expansin-A23 (275 aa).

The N-terminal stretch at 1–27 (MNLLGKMIYVEGFMMIMATLLVSMSYG) is a signal peptide. The region spanning 72–182 (QGACGYGDLF…RRISCARTGG (111 aa)) is the Expansin-like EG45 domain. Positions 192-271 (YFLMILPYNV…NWGFGQTFDG (80 aa)) constitute an Expansin-like CBD domain.

This sequence belongs to the expansin family. Expansin A subfamily.

The protein resides in the secreted. The protein localises to the cell wall. Its subcellular location is the membrane. Its function is as follows. Causes loosening and extension of plant cell walls by disrupting non-covalent bonding between cellulose microfibrils and matrix glucans. No enzymatic activity has been found. In Arabidopsis thaliana (Mouse-ear cress), this protein is Expansin-A23 (EXPA23).